The following is a 141-amino-acid chain: Large ribosomal subunit protein uL11 (141 aa).

It belongs to the universal ribosomal protein uL11 family. In terms of assembly, part of the ribosomal stalk of the 50S ribosomal subunit. Interacts with L10 and the large rRNA to form the base of the stalk. L10 forms an elongated spine to which L12 dimers bind in a sequential fashion forming a multimeric L10(L12)X complex. In terms of processing, one or more lysine residues are methylated.

In terms of biological role, forms part of the ribosomal stalk which helps the ribosome interact with GTP-bound translation factors. This chain is Large ribosomal subunit protein uL11, found in Listeria innocua serovar 6a (strain ATCC BAA-680 / CLIP 11262).